The following is a 507-amino-acid chain: Methionine--tRNA ligase (507 aa).

A 'HIGH' region motif is present at residues 12-22 (YYVNDVSHIGH). Residues 295–299 (KISKS) carry the 'KMSKS' region motif. K298 is a binding site for ATP.

This sequence belongs to the class-I aminoacyl-tRNA synthetase family. MetG type 2B subfamily. In terms of assembly, monomer.

It is found in the cytoplasm. The catalysed reaction is tRNA(Met) + L-methionine + ATP = L-methionyl-tRNA(Met) + AMP + diphosphate. Its function is as follows. Is required not only for elongation of protein synthesis but also for the initiation of all mRNA translation through initiator tRNA(fMet) aminoacylation. This chain is Methionine--tRNA ligase, found in Rickettsia typhi (strain ATCC VR-144 / Wilmington).